Reading from the N-terminus, the 277-residue chain is MGYYSVGIPFLYFKIPFTNSIRLCILYSLIGRTSPIIERKQEKLMLYMGVGDSMGRQKLTIKDINIRLADRGIQIVGEYVNQRTKTVFKCQRAHVWEATPHSILHMRRGCPHCSNNTISLDEVSNRISNIGYTLLSSYTNAKTKLHLRCNNGHDCFITLDGLTQGKRCPYCSLKWENGGFLYIMSFSSGTKVGISLYPEKRLNEVKRESGFSDLYLFTMYHLPDRETALDLEKEVHREYYNKNCGFSNFTGSTEFFNVAPEDIVIFLNSFGLEEYGH.

Its function is as follows. Putative endonuclease. The chain is Putative endonuclease from Escherichia coli (Enterobacteria phage T5).